The sequence spans 460 residues: Cysteine--tRNA ligase (460 aa).

Cys28 contacts Zn(2+). The 'HIGH' region motif lies at 30–40 (MTVYDYCHLGH). The Zn(2+) site is built by Cys209, His234, and Glu238. A 'KMSKS' region motif is present at residues 266-270 (KMSKS). Lys269 is a binding site for ATP.

The protein belongs to the class-I aminoacyl-tRNA synthetase family. In terms of assembly, monomer. Zn(2+) serves as cofactor.

It localises to the cytoplasm. The enzyme catalyses tRNA(Cys) + L-cysteine + ATP = L-cysteinyl-tRNA(Cys) + AMP + diphosphate. The protein is Cysteine--tRNA ligase of Pseudomonas putida (strain W619).